Here is a 546-residue protein sequence, read N- to C-terminus: Plastidic glucose transporter 4 (546 aa).

A run of 12 helical transmembrane segments spans residues 105–125 (VLPFVGVACLGAILFGYHLGV), 148–168 (WIVSSLLAGATVGSFTGGALA), 182–202 (IPLAIGAFLCATAQSVQTMIV), 205–225 (LLAGIGIGISSAIVPLYISEI), 240–260 (LFICIGILAALIAGLPLAANP), 265–285 (TMFGVAVIPSVLLAIGMAFSP), 345–365 (VVSVGAALFLFQQLAGINAVV), 381–401 (VAASALVGASNVFGTAVASSL), 410–430 (LLLTSFGGMALSMLLLSLSFT), 441–461 (LAVVGTVLYVLSFSLGAGPVP), 477–497 (AVALSLGMHWISNFVIGLYFL), and 503–523 (FGISSVYLGFAGVCVLAVLYI).

The protein belongs to the major facilitator superfamily. Sugar transporter (TC 2.A.1.1) family.

The protein localises to the plastid. Its subcellular location is the chloroplast inner membrane. Functionally, may be involved in the efflux of glucose towards the cytosol. The protein is Plastidic glucose transporter 4 of Arabidopsis thaliana (Mouse-ear cress).